Here is a 304-residue protein sequence, read N- to C-terminus: HTH-type transcriptional regulator TtuA (304 aa).

The region spanning 1 to 58 (MELEQLKCFVAAAEELHFGRAAQKMGILPASLGRHLRLLEESLGTRLMSRTTRSVALT) is the HTH lysR-type domain. Positions 18–37 (FGRAAQKMGILPASLGRHLR) form a DNA-binding region, H-T-H motif.

Belongs to the LysR transcriptional regulatory family.

Its function is as follows. Transcriptional regulator of the ttuABCDE tartrate utilization operon. The polypeptide is HTH-type transcriptional regulator TtuA (ttuA) (Agrobacterium vitis (Rhizobium vitis)).